The sequence spans 716 residues: Protein C-mannosyl-transferase DPY19L3 (716 aa).

Topologically, residues 1-43 (MMSIRQRREIRATEVSEDFPAQEENVKLENKLPSGCTSRRLWK) are cytoplasmic. The chain crosses the membrane as a helical span at residues 44–64 (ILSLTIGGTIALCIGLLTSVY). Residues 65–154 (LATLHENDLW…RVLPVQKYLE (90 aa)) are Lumenal-facing. N118 carries N-linked (GlcNAc...) asparagine glycosylation. Residues 155 to 182 (PVYFYIYTLFGLQAIYVTALYITSWLLS) form a helical membrane-spanning segment. Over 183–184 (GT) the chain is Cytoplasmic. The segment at residues 185–197 (WLSGLLAAFWYVT) is an intramembrane region (name=3). The Cytoplasmic segment spans residues 198–215 (NRIDTTRVEFTIPLRENW). The name=4 intramembrane region spans 216–230 (ALPFFAIQIAAITYF). The Cytoplasmic segment spans residues 231–239 (LRPNLQPLS). Residues 240–256 (ERLTLLAIFISTFLFSL) traverse the membrane as a helical segment. The Lumenal portion of the chain corresponds to 257-262 (TWQFNQ). The chain crosses the membrane as a helical span at residues 263–279 (FMMLMQALVLFTLDSLD). Residues 280 to 289 (MLPAVKATWL) lie on the Cytoplasmic side of the membrane. The chain crosses the membrane as a helical span at residues 290–306 (YGIQITSLLLVCILQFF). The Lumenal portion of the chain corresponds to 307-308 (NS). A helical membrane pass occupies residues 309–323 (MILGSLLISFNLSVF). Topologically, residues 324–338 (IARKLQKNLKTGSFL) are cytoplasmic. A helical membrane pass occupies residues 339–359 (NRLGKLLLHLFMVLCLTLFLN). The Lumenal segment spans residues 360–414 (NIIKKILNLKSDEHIFKFLKAKFGLGATRDFDANLYLCEEAFGLLPFNTFGRLSD). The chain crosses the membrane as a helical span at residues 415 to 437 (TLLFYAYIFVLSITVIVAFVVAF). At 438-465 (HNLSDSTNQQSVGKMEKGTVDLKPETAY) the chain is on the cytoplasmic side. A helical transmembrane segment spans residues 466–485 (NLIHTILFGFLALSTMRMKY). Residues 486 to 487 (LW) are Lumenal-facing. A helical membrane pass occupies residues 488–499 (TSHMCVFASFGL). Residues 500 to 522 (CSPEIWELLLKSVHLYNPKRICI) are Cytoplasmic-facing. A helical membrane pass occupies residues 523–539 (MRYSVPILILLYLCYKF). Over 540–716 (WPGMMDELSE…FHVYKLSRNK (177 aa)) the chain is Lumenal. N704 carries an N-linked (GlcNAc...) asparagine glycan.

This sequence belongs to the dpy-19 family.

Its subcellular location is the endoplasmic reticulum membrane. The enzyme catalyses L-tryptophyl-[protein] + a di-trans,poly-cis-dolichyl beta-D-mannosyl phosphate = C-alpha-D-mannosyl-L-tryptophyl-[protein] + a di-trans,poly-cis-dolichyl phosphate + H(+). It functions in the pathway protein modification; protein glycosylation. Its function is as follows. C-mannosyltransferase that mediates C-mannosylation of tryptophan residues on target proteins. The reaction occurs on the luminal side of the endoplasmic reticulum and involves the transfer of a mannose unit from a dolichylphosphate mannose (Dol-P-Man) donor to an acceptor protein containing a WxxW or WxxC consensus sequence. C-mannosylates RSPO1, a Wnt signaling regulator, preferentially at the first Trp residue in the sequence WxxW. C-mannosylates the netrin receptor UNC5A, preferentially at the third tryptophan of WxxWxxWxxC sequence. The protein is Protein C-mannosyl-transferase DPY19L3 (DPY19L3) of Pongo abelii (Sumatran orangutan).